A 162-amino-acid polypeptide reads, in one-letter code: Nucleotide-binding protein SAV_4896 (162 aa).

The protein belongs to the YajQ family.

Functionally, nucleotide-binding protein. The sequence is that of Nucleotide-binding protein SAV_4896 from Streptomyces avermitilis (strain ATCC 31267 / DSM 46492 / JCM 5070 / NBRC 14893 / NCIMB 12804 / NRRL 8165 / MA-4680).